Consider the following 219-residue polypeptide: Thiamine-phosphate synthase (219 aa).

4-amino-2-methyl-5-(diphosphooxymethyl)pyrimidine-binding positions include 44–48 and Asn-79; that span reads QFREK. Positions 80 and 99 each coordinate Mg(2+). Ser-117 is a 4-amino-2-methyl-5-(diphosphooxymethyl)pyrimidine binding site. Residue 143-145 coordinates 2-[(2R,5Z)-2-carboxy-4-methylthiazol-5(2H)-ylidene]ethyl phosphate; sequence TST. 4-amino-2-methyl-5-(diphosphooxymethyl)pyrimidine is bound at residue Lys-146. 2-[(2R,5Z)-2-carboxy-4-methylthiazol-5(2H)-ylidene]ethyl phosphate is bound by residues Gly-175 and 195–196; that span reads IS.

It belongs to the thiamine-phosphate synthase family. Mg(2+) is required as a cofactor.

The catalysed reaction is 2-[(2R,5Z)-2-carboxy-4-methylthiazol-5(2H)-ylidene]ethyl phosphate + 4-amino-2-methyl-5-(diphosphooxymethyl)pyrimidine + 2 H(+) = thiamine phosphate + CO2 + diphosphate. The enzyme catalyses 2-(2-carboxy-4-methylthiazol-5-yl)ethyl phosphate + 4-amino-2-methyl-5-(diphosphooxymethyl)pyrimidine + 2 H(+) = thiamine phosphate + CO2 + diphosphate. It catalyses the reaction 4-methyl-5-(2-phosphooxyethyl)-thiazole + 4-amino-2-methyl-5-(diphosphooxymethyl)pyrimidine + H(+) = thiamine phosphate + diphosphate. It functions in the pathway cofactor biosynthesis; thiamine diphosphate biosynthesis; thiamine phosphate from 4-amino-2-methyl-5-diphosphomethylpyrimidine and 4-methyl-5-(2-phosphoethyl)-thiazole: step 1/1. In terms of biological role, condenses 4-methyl-5-(beta-hydroxyethyl)thiazole monophosphate (THZ-P) and 2-methyl-4-amino-5-hydroxymethyl pyrimidine pyrophosphate (HMP-PP) to form thiamine monophosphate (TMP). The protein is Thiamine-phosphate synthase of Bacillus cereus (strain ZK / E33L).